Reading from the N-terminus, the 259-residue chain is Glutamate 5-kinase (259 aa).

Residue K18 coordinates ATP. The substrate site is built by S54, D141, and N153. Residue 173–174 (SD) participates in ATP binding.

The protein belongs to the glutamate 5-kinase family.

It is found in the cytoplasm. It catalyses the reaction L-glutamate + ATP = L-glutamyl 5-phosphate + ADP. It functions in the pathway amino-acid biosynthesis; L-proline biosynthesis; L-glutamate 5-semialdehyde from L-glutamate: step 1/2. Catalyzes the transfer of a phosphate group to glutamate to form L-glutamate 5-phosphate. This chain is Glutamate 5-kinase, found in Clavibacter michiganensis subsp. michiganensis (strain NCPPB 382).